Consider the following 288-residue polypeptide: Probable HTH-type transcriptional regulator STM3175 (288 aa).

One can recognise an HTH araC/xylS-type domain in the interval 14-113; it reads RRVCDHIERH…GQSPRRFRQS (100 aa). 2 DNA-binding regions (H-T-H motif) span residues 31 to 52 and 80 to 103; these read EALSRMAHSSPFHFHRQFTTWS and VIDIALDAGFQNPESFTRAFKTAF. The interval 111 to 288 is putative effector binding domain; binds the peptide antibiotic albicidin; it reads RQSPDWLAWH…LLTDIYLPLR (178 aa).

In terms of assembly, homodimer.

Its function is as follows. Probable transcription factor. This is Probable HTH-type transcriptional regulator STM3175 from Salmonella typhimurium (strain LT2 / SGSC1412 / ATCC 700720).